The primary structure comprises 433 residues: KICSTOR complex protein ITFG2 (433 aa).

The stretch at 19-48 (FPHAICLGDVDNDTLNELVVGDTSGKVSVY) is one FG-GAP 1; atypical repeat. A Phosphoserine modification is found at serine 104. Residues 126 to 155 (NTKVMLISDIDGDGCRELVVGYTDRVVRAF) form an FG-GAP 2; atypical repeat. Position 220 is a phosphoserine (serine 220).

Part of the KICSTOR complex composed of KPTN, ITFG2, KICS2 and SZT2. SZT2 probably serves as a link between the other three proteins in the KICSTOR complex and may mediate the direct interaction with the GATOR complex via GATOR1. The KICSTOR complex interacts directly with the GATOR1 complex and most probably indirectly with the GATOR2 complex in an amino acid-independent manner.

It localises to the lysosome membrane. In terms of biological role, as part of the KICSTOR complex functions in the amino acid-sensing branch of the TORC1 signaling pathway. Recruits, in an amino acid-independent manner, the GATOR1 complex to the lysosomal membranes and allows its interaction with GATOR2 and the RAG GTPases. Functions upstream of the RAG GTPases and is required to negatively regulate mTORC1 signaling in absence of amino acids. In absence of the KICSTOR complex mTORC1 is constitutively localized to the lysosome and activated. The KICSTOR complex is also probably involved in the regulation of mTORC1 by glucose. The chain is KICSTOR complex protein ITFG2 from Pongo abelii (Sumatran orangutan).